A 100-amino-acid polypeptide reads, in one-letter code: Urease subunit gamma (100 aa).

Belongs to the urease gamma subunit family. As to quaternary structure, heterotrimer of UreA (gamma), UreB (beta) and UreC (alpha) subunits. Three heterotrimers associate to form the active enzyme.

It is found in the cytoplasm. It carries out the reaction urea + 2 H2O + H(+) = hydrogencarbonate + 2 NH4(+). Its pathway is nitrogen metabolism; urea degradation; CO(2) and NH(3) from urea (urease route): step 1/1. The protein is Urease subunit gamma of Arthrobacter sp. (strain FB24).